A 598-amino-acid polypeptide reads, in one-letter code: NADH-quinone oxidoreductase subunit C/D (598 aa).

The segment at 1-189 (MTDQIAQNSA…DPYVLTKQKE (189 aa)) is NADH dehydrogenase I subunit C. An NADH dehydrogenase I subunit D region spans residues 213–598 (DFMFLNLGPN…IDFVMSDVDR (386 aa)).

It in the N-terminal section; belongs to the complex I 30 kDa subunit family. The protein in the C-terminal section; belongs to the complex I 49 kDa subunit family. As to quaternary structure, NDH-1 is composed of 13 different subunits. Subunits NuoB, CD, E, F, and G constitute the peripheral sector of the complex.

It is found in the cell inner membrane. The catalysed reaction is a quinone + NADH + 5 H(+)(in) = a quinol + NAD(+) + 4 H(+)(out). NDH-1 shuttles electrons from NADH, via FMN and iron-sulfur (Fe-S) centers, to quinones in the respiratory chain. The immediate electron acceptor for the enzyme in this species is believed to be ubiquinone. Couples the redox reaction to proton translocation (for every two electrons transferred, four hydrogen ions are translocated across the cytoplasmic membrane), and thus conserves the redox energy in a proton gradient. In Proteus mirabilis (strain HI4320), this protein is NADH-quinone oxidoreductase subunit C/D.